Consider the following 115-residue polypeptide: Ribonuclease P protein component (115 aa).

It belongs to the RnpA family. As to quaternary structure, consists of a catalytic RNA component (M1 or rnpB) and a protein subunit.

It catalyses the reaction Endonucleolytic cleavage of RNA, removing 5'-extranucleotides from tRNA precursor.. Functionally, RNaseP catalyzes the removal of the 5'-leader sequence from pre-tRNA to produce the mature 5'-terminus. It can also cleave other RNA substrates such as 4.5S RNA. The protein component plays an auxiliary but essential role in vivo by binding to the 5'-leader sequence and broadening the substrate specificity of the ribozyme. The polypeptide is Ribonuclease P protein component (Bacillus cereus (strain Q1)).